We begin with the raw amino-acid sequence, 410 residues long: Mating-type locus allele B4 protein (410 aa).

A variable domain between B alleles region spans residues 1-110; the sequence is MSSDPKISIT…ANASSPVVGC (110 aa). The segment at residues 107-184 is a DNA-binding region (homeobox; TALE-type); the sequence is VVGCRELSED…NARRRSGWSH (78 aa). The highly conserved between B alleles stretch occupies residues 111–410; sequence RELSEDLPAY…PFLCLSVAFV (300 aa). 3 disordered regions span residues 202–241, 278–335, and 375–394; these read RAKL…TPAD, TPKP…TPEL, and RGNR…QPDE. Residues 206 to 222 show a composition bias toward low complexity; it reads SSSNQSTPPSPTSEYPS. Residues 276-308 carry the Nuclear localization signal motif; it reads KKTPKPGMPRPVTTVAKRQPARKTKPAAKPKSR. The span at 294-307 shows a compositional bias: basic residues; the sequence is QPARKTKPAAKPKS. Positions 312–335 are enriched in polar residues; it reads PRASTTPSIDSTLDSSKLESTPEL. Residues 333-410 form a not essential for B4 function region; that stretch reads PELSMCSTAD…PFLCLSVAFV (78 aa). The span at 375 to 388 shows a compositional bias: basic residues; sequence RGNRKVKALPKRAG.

This sequence belongs to the TALE/M-ATYP homeobox family.

It localises to the nucleus. Its function is as follows. The B locus has at least 25 alleles, and any combination of two different B alleles yields a multimeric regulatory protein, that activates genes responsible for the pathogenicity and for the sexual development of the fungus within the corn plant. This chain is Mating-type locus allele B4 protein, found in Mycosarcoma maydis (Corn smut fungus).